A 145-amino-acid chain; its full sequence is Actin-depolymerizing factor 2 (145 aa).

Positions Gly-13–His-145 constitute an ADF-H domain.

This sequence belongs to the actin-binding proteins ADF family.

In terms of biological role, actin-depolymerizing protein. Severs actin filaments (F-actin) and binds to actin monomers. The chain is Actin-depolymerizing factor 2 (ADF2) from Oryza sativa subsp. japonica (Rice).